We begin with the raw amino-acid sequence, 82 residues long: Small ribosomal subunit protein bS18 (82 aa).

This sequence belongs to the bacterial ribosomal protein bS18 family. As to quaternary structure, part of the 30S ribosomal subunit. Forms a tight heterodimer with protein bS6.

Its function is as follows. Binds as a heterodimer with protein bS6 to the central domain of the 16S rRNA, where it helps stabilize the platform of the 30S subunit. This chain is Small ribosomal subunit protein bS18, found in Methylobacterium nodulans (strain LMG 21967 / CNCM I-2342 / ORS 2060).